Reading from the N-terminus, the 264-residue chain is 3-methyl-2-oxobutanoate hydroxymethyltransferase (264 aa).

Residues Asp-45 and Asp-84 each coordinate Mg(2+). 3-methyl-2-oxobutanoate-binding positions include Asp-45–Ser-46, Asp-84, and Lys-112. Mg(2+) is bound at residue Glu-114. The Proton acceptor role is filled by Glu-181.

This sequence belongs to the PanB family. As to quaternary structure, homodecamer; pentamer of dimers. Mg(2+) serves as cofactor.

It localises to the cytoplasm. The enzyme catalyses 3-methyl-2-oxobutanoate + (6R)-5,10-methylene-5,6,7,8-tetrahydrofolate + H2O = 2-dehydropantoate + (6S)-5,6,7,8-tetrahydrofolate. Its pathway is cofactor biosynthesis; (R)-pantothenate biosynthesis; (R)-pantoate from 3-methyl-2-oxobutanoate: step 1/2. Functionally, catalyzes the reversible reaction in which hydroxymethyl group from 5,10-methylenetetrahydrofolate is transferred onto alpha-ketoisovalerate to form ketopantoate. This chain is 3-methyl-2-oxobutanoate hydroxymethyltransferase, found in Vibrio cholerae serotype O1 (strain ATCC 39541 / Classical Ogawa 395 / O395).